The sequence spans 200 residues: Glycerol-3-phosphate acyltransferase (200 aa).

5 consecutive transmembrane segments (helical) span residues 2–22, 51–71, 84–104, 114–134, and 159–179; these read FNIP…AVIV, KAAV…VLLA, AIAA…FFGF, LGVL…IWLV, and FFMP…LVLF.

The protein belongs to the PlsY family. In terms of assembly, probably interacts with PlsX.

It localises to the cell inner membrane. It catalyses the reaction an acyl phosphate + sn-glycerol 3-phosphate = a 1-acyl-sn-glycero-3-phosphate + phosphate. It participates in lipid metabolism; phospholipid metabolism. Its function is as follows. Catalyzes the transfer of an acyl group from acyl-phosphate (acyl-PO(4)) to glycerol-3-phosphate (G3P) to form lysophosphatidic acid (LPA). This enzyme utilizes acyl-phosphate as fatty acyl donor, but not acyl-CoA or acyl-ACP. The chain is Glycerol-3-phosphate acyltransferase from Neisseria meningitidis serogroup C / serotype 2a (strain ATCC 700532 / DSM 15464 / FAM18).